The primary structure comprises 165 residues: V-type proton ATPase 16 kDa proteolipid subunit (165 aa).

The Lumenal portion of the chain corresponds to 1-10 (MPSTFSGDET). The helical transmembrane segment at 11 to 33 (APFFGFLGAAAALVFSCMGAAYG) threads the bilayer. Over 34-55 (TAKSGVGVASMGVMRPELVMKS) the chain is Cytoplasmic. The helical transmembrane segment at 56-76 (IVPVVMAGVLGIYGLIIAVII) threads the bilayer. Residues 77–95 (STGINPKTKSYYLFDGYAH) are Lumenal-facing. A helical transmembrane segment spans residues 96-117 (LSSGLACGLAGLSAGMAIGIVG). Over 118–129 (DAGVRANAQQPK) the chain is Cytoplasmic. Residues 130 to 155 (LFVGMILILIFAEALALYGLIVGIIL) traverse the membrane as a helical segment. Residues 156–165 (SSRAGQSRAE) lie on the Lumenal side of the membrane.

It belongs to the V-ATPase proteolipid subunit family. In terms of assembly, V-ATPase is a heteromultimeric enzyme composed of a peripheral catalytic V1 complex (main components: subunits A, B, C, D, E, and F) attached to an integral membrane V0 proton pore complex (main component: the proteolipid protein; which is present as a hexamer that forms the proton-conducting pore).

Its subcellular location is the vacuole membrane. Its function is as follows. Proton-conducting pore forming subunit of the membrane integral V0 complex of vacuolar ATPase. V-ATPase is responsible for acidifying a variety of intracellular compartments in eukaryotic cells. This Nicotiana tabacum (Common tobacco) protein is V-type proton ATPase 16 kDa proteolipid subunit.